Consider the following 330-residue polypeptide: Beta-hexosaminidase (330 aa).

Substrate contacts are provided by residues Asp62, Arg70, Arg130, and 160 to 161 (KH). The active-site Proton donor/acceptor is the His173. The active-site Nucleophile is Asp242.

The protein belongs to the glycosyl hydrolase 3 family. NagZ subfamily.

It is found in the cytoplasm. The enzyme catalyses Hydrolysis of terminal non-reducing N-acetyl-D-hexosamine residues in N-acetyl-beta-D-hexosaminides.. The protein operates within cell wall biogenesis; peptidoglycan recycling. Its function is as follows. Plays a role in peptidoglycan recycling by cleaving the terminal beta-1,4-linked N-acetylglucosamine (GlcNAc) from peptide-linked peptidoglycan fragments, giving rise to free GlcNAc, anhydro-N-acetylmuramic acid and anhydro-N-acetylmuramic acid-linked peptides. In Vibrio cholerae serotype O1 (strain ATCC 39541 / Classical Ogawa 395 / O395), this protein is Beta-hexosaminidase.